The primary structure comprises 130 residues: Bet1-like SNARE 1-2 (130 aa).

Residues 1–106 (MNFRRENRAS…EKKSNRKSCK (106 aa)) lie on the Cytoplasmic side of the membrane. The 63-residue stretch at 33–95 (AHDERDNDEA…SGTINRFKLV (63 aa)) folds into the t-SNARE coiled-coil homology domain. Residues 40 to 82 (DEALENLQDRVSFLKRVTGDIHEEVENHNRLLDKVGNKMDSAR) are a coiled coil. The helical; Anchor for type IV membrane protein transmembrane segment at 107–122 (LIAYFVLLFLIMYYLI) threads the bilayer. At 123–130 (RLLNYIKG) the chain is on the vesicular side.

It belongs to the BET1 family.

It localises to the golgi apparatus membrane. The protein resides in the endoplasmic reticulum membrane. Its function is as follows. Required for vesicular transport from the ER to the Golgi complex. Functions as a SNARE associated with ER-derived vesicles. The protein is Bet1-like SNARE 1-2 (BET12) of Arabidopsis thaliana (Mouse-ear cress).